A 354-amino-acid polypeptide reads, in one-letter code: Protein-arginine kinase (354 aa).

One can recognise a Phosphagen kinase C-terminal domain in the interval 24-254 (IVLSSRIRLA…QQIIQQEKMA (231 aa)). ATP contacts are provided by residues 27-31 (SSRIR), histidine 92, arginine 125, 176-180 (RASVM), and 207-212 (RGIYGE). The RDXXRA motif of the pArg binding pocket involved in allosteric regulation motif lies at 337 to 342 (RDYRRA).

This sequence belongs to the ATP:guanido phosphotransferase family.

It catalyses the reaction L-arginyl-[protein] + ATP = N(omega)-phospho-L-arginyl-[protein] + ADP + H(+). With respect to regulation, appears to be allosterically activated by the binding of pArg-containing polypeptides to the pArg-binding pocket localized in the C-terminal domain of McsB. Catalyzes the specific phosphorylation of arginine residues in a large number of proteins. Is part of the bacterial stress response system. Protein arginine phosphorylation has a physiologically important role and is involved in the regulation of many critical cellular processes, such as protein homeostasis, motility, competence, and stringent and stress responses, by regulating gene expression and protein activity. This chain is Protein-arginine kinase, found in Bacillus cereus (strain AH187).